The primary structure comprises 158 residues: GTP-dependent dephospho-CoA kinase (158 aa).

GTP contacts are provided by aspartate 35, valine 36, aspartate 54, lysine 56, glutamate 109, and aspartate 132.

The protein belongs to the GTP-dependent DPCK family.

The enzyme catalyses 3'-dephospho-CoA + GTP = GDP + CoA + H(+). It participates in cofactor biosynthesis; coenzyme A biosynthesis. Catalyzes the GTP-dependent phosphorylation of the 3'-hydroxyl group of dephosphocoenzyme A to form coenzyme A (CoA). The protein is GTP-dependent dephospho-CoA kinase of Methanococcus maripaludis (strain C5 / ATCC BAA-1333).